Consider the following 835-residue polypeptide: Leucine--tRNA ligase (835 aa).

A 'HIGH' region motif is present at residues 42–52 (PYPSGRIHMGH). The 'KMSKS' region motif lies at 612–616 (KMSKS). Lys-615 is an ATP binding site.

This sequence belongs to the class-I aminoacyl-tRNA synthetase family.

The protein resides in the cytoplasm. The catalysed reaction is tRNA(Leu) + L-leucine + ATP = L-leucyl-tRNA(Leu) + AMP + diphosphate. The chain is Leucine--tRNA ligase from Rhizorhabdus wittichii (strain DSM 6014 / CCUG 31198 / JCM 15750 / NBRC 105917 / EY 4224 / RW1) (Sphingomonas wittichii).